The sequence spans 319 residues: Pantothenate kinase (319 aa).

101 to 108 (GSVAVGKS) is an ATP binding site.

This sequence belongs to the prokaryotic pantothenate kinase family.

The protein resides in the cytoplasm. The catalysed reaction is (R)-pantothenate + ATP = (R)-4'-phosphopantothenate + ADP + H(+). It functions in the pathway cofactor biosynthesis; coenzyme A biosynthesis; CoA from (R)-pantothenate: step 1/5. The chain is Pantothenate kinase from Clavibacter michiganensis subsp. michiganensis (strain NCPPB 382).